The sequence spans 279 residues: Tryptophan 2,3-dioxygenase (279 aa).

Residues 48-52 (FIIQH), tyrosine 110, and arginine 114 contribute to the substrate site. Histidine 237 lines the heme pocket. Substrate is bound at residue threonine 251.

It belongs to the tryptophan 2,3-dioxygenase family. Homotetramer. Heme is required as a cofactor.

It catalyses the reaction L-tryptophan + O2 = N-formyl-L-kynurenine. It participates in amino-acid degradation; L-tryptophan degradation via kynurenine pathway; L-kynurenine from L-tryptophan: step 1/2. Functionally, heme-dependent dioxygenase that catalyzes the oxidative cleavage of the L-tryptophan (L-Trp) pyrrole ring and converts L-tryptophan to N-formyl-L-kynurenine. Catalyzes the oxidative cleavage of the indole moiety. The polypeptide is Tryptophan 2,3-dioxygenase (Bradyrhizobium sp. (strain BTAi1 / ATCC BAA-1182)).